The chain runs to 288 residues: Glycine--tRNA ligase alpha subunit (288 aa).

It belongs to the class-II aminoacyl-tRNA synthetase family. As to quaternary structure, tetramer of two alpha and two beta subunits.

It is found in the cytoplasm. It carries out the reaction tRNA(Gly) + glycine + ATP = glycyl-tRNA(Gly) + AMP + diphosphate. The polypeptide is Glycine--tRNA ligase alpha subunit (Rickettsia canadensis (strain McKiel)).